The chain runs to 245 residues: Octanoyltransferase (245 aa).

Positions 54–238 (GEATELVWLL…AFENIFGETR (185 aa)) constitute a BPL/LPL catalytic domain. Residues 92–99 (RGGQLTYH), 167–169 (AIG), and 180–182 (GIA) contribute to the substrate site. The active-site Acyl-thioester intermediate is the Cys-198.

The protein belongs to the LipB family.

It is found in the cytoplasm. The enzyme catalyses octanoyl-[ACP] + L-lysyl-[protein] = N(6)-octanoyl-L-lysyl-[protein] + holo-[ACP] + H(+). Its pathway is protein modification; protein lipoylation via endogenous pathway; protein N(6)-(lipoyl)lysine from octanoyl-[acyl-carrier-protein]: step 1/2. Catalyzes the transfer of endogenously produced octanoic acid from octanoyl-acyl-carrier-protein onto the lipoyl domains of lipoate-dependent enzymes. Lipoyl-ACP can also act as a substrate although octanoyl-ACP is likely to be the physiological substrate. This Rhodopseudomonas palustris (strain ATCC BAA-98 / CGA009) protein is Octanoyltransferase.